The following is a 1507-amino-acid chain: ABC multidrug transporter SNQ2 (1507 aa).

The interval Met1–Glu73 is disordered. Residues Arg41–Asn55 are compositionally biased toward basic and acidic residues. 2 N-linked (GlcNAc...) asparagine glycosylation sites follow: Asn55 and Asn336. Residues Cys157–Pro412 enclose the ABC transporter 1 domain. A run of 3 helical transmembrane segments spans residues Ala522–Tyr542, Gly556–Phe576, and Phe605–Leu625. Asn626 carries an N-linked (GlcNAc...) asparagine glycan. A helical membrane pass occupies residues Val635 to Ala655. Residue Asn659 is glycosylated (N-linked (GlcNAc...) asparagine). 2 helical membrane passes run Ser665–Pro685 and Phe773–Ile793. Residues Phe857 to Ala1099 form the ABC transporter 2 domain. Residue Asn878 is glycosylated (N-linked (GlcNAc...) asparagine). Gly893–Thr900 serves as a coordination point for ATP. The next 3 membrane-spanning stretches (helical) occupy residues Tyr1193–Tyr1213, Thr1220–Met1240, and Leu1270–Val1290. Asn1311 carries an N-linked (GlcNAc...) asparagine glycan. A run of 2 helical transmembrane segments spans residues Ile1314 to Leu1334 and Val1339 to Ser1359. An N-linked (GlcNAc...) asparagine glycan is attached at Asn1428. Residues Phe1459–Ile1479 form a helical membrane-spanning segment.

This sequence belongs to the ABC transporter superfamily. ABCG family. PDR (TC 3.A.1.205) subfamily.

The protein resides in the cell membrane. In terms of biological role, ABC multidrug transporter involved in the response to azoles such as fluconazole, itraconazole, ketoconazole and voriconazole and contributes to the development of PDR1-dependent azole resistance. Plays a role in biofilm tolerance to fluconazole. Also confers resistance to 4-nitroquinoline-N-oxide (4-NQO). In Candida glabrata (strain ATCC 2001 / BCRC 20586 / JCM 3761 / NBRC 0622 / NRRL Y-65 / CBS 138) (Yeast), this protein is ABC multidrug transporter SNQ2.